Reading from the N-terminus, the 211-residue chain is Suppressor of RNA silencing p3 (211 aa).

It belongs to the tenuiviruses p3 protein family. In terms of assembly, homodimer.

The protein resides in the host cytoplasm. Its function is as follows. Acts as a suppressor of RNA-mediated gene silencing, also known as post-transcriptional gene silencing (PTGS), presumably through the binding of dsRNA. In Avena sativa (Oat), this protein is Suppressor of RNA silencing p3.